The following is a 75-amino-acid chain: MDNHRRTKQPKTNSIVTSSSEEVSSLEWEVVNMSQEEEDLVSRMHKLVGDRWELIAGRIPGRTAGEIERFWVMKN.

The segment at 1–20 (MDNHRRTKQPKTNSIVTSSS) is disordered. The Myb-like domain occupies 34-71 (SQEEEDLVSRMHKLVGDRWELIAGRIPGRTAGEIERFW).

As to expression, expressed in leaf epidermal cells, stomate guard cells in leaves, cotyledons and hypocotyls, inflorescences, developing seeds and siliques.

The protein localises to the nucleus. Functionally, MYB-type transcription factor involved in epidermal cell fate specification. Acts as a negative regulator of trichome development, including endoreplication, by mediating lateral inhibition. Promotes the formation of hair developing cells in H position in root epidermis, probably by inhibiting non-hair cell formation. May have pleiotropic effects on flowering development and epidermal cell size through the regulation of endoreduplication. This chain is MYB-like transcription factor ETC3 (ETC3), found in Arabidopsis thaliana (Mouse-ear cress).